A 701-amino-acid chain; its full sequence is Putative pectinesterase/pectinesterase inhibitor 43 (701 aa).

Residues methionine 1 to alanine 22 form the signal peptide. The pectinesterase inhibitor 43 stretch occupies residues methionine 42 to isoleucine 195. Low complexity-rich tracts occupy residues glycine 221–serine 256 and serine 263–asparagine 275. The disordered stretch occupies residues glycine 221 to asparagine 351. Residue asparagine 267 is glycosylated (N-linked (GlcNAc...) asparagine). Polar residues-rich tracts occupy residues arginine 276–glutamate 287 and glutamine 313–asparagine 338. The segment at asparagine 391–asparagine 688 is pectinesterase 43. The substrate site is built by threonine 467 and glutamine 497. Catalysis depends on aspartate 520, which acts as the Proton donor; for pectinesterase activity. The cysteines at positions 534 and 554 are disulfide-linked. The Nucleophile; for pectinesterase activity role is filled by aspartate 541. Residues arginine 609 and tryptophan 611 each coordinate substrate. N-linked (GlcNAc...) asparagine glycosylation is present at asparagine 637.

This sequence in the N-terminal section; belongs to the PMEI family. The protein in the C-terminal section; belongs to the pectinesterase family. Expressed in flower buds.

It is found in the secreted. Its subcellular location is the cell wall. It carries out the reaction [(1-&gt;4)-alpha-D-galacturonosyl methyl ester](n) + n H2O = [(1-&gt;4)-alpha-D-galacturonosyl](n) + n methanol + n H(+). It functions in the pathway glycan metabolism; pectin degradation; 2-dehydro-3-deoxy-D-gluconate from pectin: step 1/5. Its function is as follows. Acts in the modification of cell walls via demethylesterification of cell wall pectin. This chain is Putative pectinesterase/pectinesterase inhibitor 43 (PME43), found in Arabidopsis thaliana (Mouse-ear cress).